The following is a 342-amino-acid chain: Ferrochelatase (342 aa).

Fe cation contacts are provided by H188 and E268.

The protein belongs to the ferrochelatase family.

The protein localises to the cytoplasm. It catalyses the reaction heme b + 2 H(+) = protoporphyrin IX + Fe(2+). It participates in porphyrin-containing compound metabolism; protoheme biosynthesis; protoheme from protoporphyrin-IX: step 1/1. Its function is as follows. Catalyzes the ferrous insertion into protoporphyrin IX. The chain is Ferrochelatase from Rickettsia typhi (strain ATCC VR-144 / Wilmington).